The following is a 310-amino-acid chain: Probable RuBisCO transcriptional regulator (310 aa).

The HTH lysR-type domain maps to 6 to 63 (FTLDQLRILKAIASEGSFKKAAESLYISQPAVSLQIQNLEKQLNIPIFDRANRKAVFT). Residues 23-42 (FKKAAESLYISQPAVSLQIQ) constitute a DNA-binding region (H-T-H motif).

It belongs to the LysR transcriptional regulatory family.

It localises to the plastid. Its subcellular location is the chloroplast. Its function is as follows. Trans-acting transcriptional regulator of RuBisCO genes (rbcL and rbcS) expression. This Guillardia theta (Cryptophyte) protein is Probable RuBisCO transcriptional regulator (rbcR).